Consider the following 196-residue polypeptide: Putative NADH dehydrogenase/NAD(P)H nitroreductase Smal_0358 (196 aa).

This sequence belongs to the nitroreductase family. HadB/RutE subfamily. Requires FMN as cofactor.

This is Putative NADH dehydrogenase/NAD(P)H nitroreductase Smal_0358 from Stenotrophomonas maltophilia (strain R551-3).